The chain runs to 80 residues: U-actitoxin-Avd9b (80 aa).

A signal peptide spans Met-1–Ala-20. Positions Glu-21–Lys-39 are excised as a propeptide. The region spanning Cys-45–Cys-80 is the ShKT domain. 3 disulfides stabilise this stretch: Cys-45/Cys-80, Cys-54/Cys-73, and Cys-63/Cys-77. The tract at residues Lys-68–Tyr-69 is crucial for binding to potassium channels.

The protein belongs to the sea anemone type 1 potassium channel toxin family. Type 1b subfamily.

The protein resides in the secreted. Its subcellular location is the nematocyst. Functionally, inhibits voltage-gated potassium channels (Kv1/KCNA). The sequence is that of U-actitoxin-Avd9b from Anemonia viridis (Snakelocks anemone).